We begin with the raw amino-acid sequence, 162 residues long: Regulator of sigma D (162 aa).

It belongs to the Rsd/AlgQ family. Interacts with RpoD.

The protein localises to the cytoplasm. Its function is as follows. Binds RpoD and negatively regulates RpoD-mediated transcription activation by preventing the interaction between the primary sigma factor RpoD with the catalytic core of the RNA polymerase and with promoter DNA. May be involved in replacement of the RNA polymerase sigma subunit from RpoD to RpoS during the transition from exponential growth to the stationary phase. This Salmonella agona (strain SL483) protein is Regulator of sigma D.